Reading from the N-terminus, the 447-residue chain is Gamma-glutamyl phosphate reductase (447 aa).

This sequence belongs to the gamma-glutamyl phosphate reductase family.

Its subcellular location is the cytoplasm. The catalysed reaction is L-glutamate 5-semialdehyde + phosphate + NADP(+) = L-glutamyl 5-phosphate + NADPH + H(+). The protein operates within amino-acid biosynthesis; L-proline biosynthesis; L-glutamate 5-semialdehyde from L-glutamate: step 2/2. In terms of biological role, catalyzes the NADPH-dependent reduction of L-glutamate 5-phosphate into L-glutamate 5-semialdehyde and phosphate. The product spontaneously undergoes cyclization to form 1-pyrroline-5-carboxylate. This is Gamma-glutamyl phosphate reductase from Methanosarcina acetivorans (strain ATCC 35395 / DSM 2834 / JCM 12185 / C2A).